The sequence spans 482 residues: Peptide chain release factor PrfB2, chloroplastic (482 aa).

The transit peptide at 1 to 21 (MLSLIIRRSRSRFIIHGIKIS) directs the protein to the chloroplast.

This sequence belongs to the prokaryotic/mitochondrial release factor family.

It is found in the plastid. The protein resides in the chloroplast stroma. In terms of biological role, directs the termination of translation in response to the peptide chain termination codon UGA. Required for the proper translation, stability and normal processing of UGA-containing polycistronic transcripts in chloroplasts. This is Peptide chain release factor PrfB2, chloroplastic from Arabidopsis thaliana (Mouse-ear cress).